The chain runs to 476 residues: ATP synthase subunit beta (476 aa).

152 to 159 contributes to the ATP binding site; it reads GGAGVGKT.

It belongs to the ATPase alpha/beta chains family. In terms of assembly, F-type ATPases have 2 components, CF(1) - the catalytic core - and CF(0) - the membrane proton channel. CF(1) has five subunits: alpha(3), beta(3), gamma(1), delta(1), epsilon(1). CF(0) has three main subunits: a(1), b(2) and c(9-12). The alpha and beta chains form an alternating ring which encloses part of the gamma chain. CF(1) is attached to CF(0) by a central stalk formed by the gamma and epsilon chains, while a peripheral stalk is formed by the delta and b chains.

It is found in the cell inner membrane. It carries out the reaction ATP + H2O + 4 H(+)(in) = ADP + phosphate + 5 H(+)(out). Functionally, produces ATP from ADP in the presence of a proton gradient across the membrane. The catalytic sites are hosted primarily by the beta subunits. In Acidiphilium cryptum (strain JF-5), this protein is ATP synthase subunit beta.